The chain runs to 202 residues: LexA repressor (202 aa).

The H-T-H motif DNA-binding region spans 28–48; the sequence is RAEIAMRLGFRSPNAAEEHLK. Residues S119 and K156 each act as for autocatalytic cleavage activity in the active site.

Belongs to the peptidase S24 family. Homodimer.

It catalyses the reaction Hydrolysis of Ala-|-Gly bond in repressor LexA.. Represses a number of genes involved in the response to DNA damage (SOS response), including recA and lexA. Binds to the 16 bp palindromic sequence 5'-CTGTATATATATACAG-3'. In the presence of single-stranded DNA, RecA interacts with LexA causing an autocatalytic cleavage which disrupts the DNA-binding part of LexA, leading to derepression of the SOS regulon and eventually DNA repair. This chain is LexA repressor, found in Serratia proteamaculans (strain 568).